Reading from the N-terminus, the 206-residue chain is Outer-membrane lipoprotein carrier protein (206 aa).

Positions 1–21 are cleaved as a signal peptide; the sequence is MKKLLCAVLLSPLLYSNAVLA.

The protein belongs to the LolA family. As to quaternary structure, monomer.

It localises to the periplasm. Its function is as follows. Participates in the translocation of lipoproteins from the inner membrane to the outer membrane. Only forms a complex with a lipoprotein if the residue after the N-terminal Cys is not an aspartate (The Asp acts as a targeting signal to indicate that the lipoprotein should stay in the inner membrane). This chain is Outer-membrane lipoprotein carrier protein, found in Shewanella sp. (strain ANA-3).